A 180-amino-acid polypeptide reads, in one-letter code: Small ribosomal subunit protein uS4 (180 aa).

In terms of domain architecture, S4 RNA-binding spans 103–165 (RRLQTIVYRK…KGSPFAKEGH (63 aa)).

It belongs to the universal ribosomal protein uS4 family. Part of the 30S ribosomal subunit. Contacts protein S5. The interaction surface between S4 and S5 is involved in control of translational fidelity.

Its function is as follows. One of the primary rRNA binding proteins, it binds directly to 16S rRNA where it nucleates assembly of the body of the 30S subunit. With S5 and S12 plays an important role in translational accuracy. In Thermococcus kodakarensis (strain ATCC BAA-918 / JCM 12380 / KOD1) (Pyrococcus kodakaraensis (strain KOD1)), this protein is Small ribosomal subunit protein uS4.